A 416-amino-acid polypeptide reads, in one-letter code: Antigen EG13 (416 aa).

An F-BAR domain is found at 1-247; it reads MIQERADIEK…TVAKVDADAD (247 aa). The segment at 297–327 is disordered; the sequence is LKTFTSPDRGGPIPGTTDSGSNISTSPVHTT. The span at 312 to 327 shows a compositional bias: polar residues; sequence TTDSGSNISTSPVHTT. Positions 361-416 constitute an SH3 domain; the sequence is RPGVPIRALYDYVGVEADELSFNSGDLFEKLEDEDEQGWCKGRKDGRVGLYPRQLR.

In Echinococcus granulosus (Hydatid tapeworm), this protein is Antigen EG13 (EG13).